The sequence spans 80 residues: Defensin-like protein 2 (80 aa).

An N-terminal signal peptide occupies residues 1–29 (MAKFASIIVLLFVALVVFAAFEEPTMVEA). The residue at position 30 (Gln-30) is a Pyrrolidone carboxylic acid. Intrachain disulfides connect Cys-33/Cys-80, Cys-44/Cys-65, Cys-50/Cys-74, and Cys-54/Cys-76.

The protein belongs to the DEFL family.

Its subcellular location is the secreted. In terms of biological role, possesses antifungal activity sensitive to inorganic cations. Induces potential changes in fungal membranes and increased K(+) efflux and Ca(2+) uptake. This Raphanus sativus (Radish) protein is Defensin-like protein 2 (AFP2).